The following is a 559-amino-acid chain: Membrane protein insertase YidC (559 aa).

6 helical membrane-spanning segments follow: residues 5–25 (IVNL…WQYF), 332–352 (AIDF…MNFF), 355–375 (YVGN…LLMF), 429–449 (LPIL…YVTI), 474–494 (LFGL…WPIL), and 520–540 (FMPL…LIYW).

This sequence belongs to the OXA1/ALB3/YidC family. Type 1 subfamily. As to quaternary structure, interacts with the Sec translocase complex via SecD. Specifically interacts with transmembrane segments of nascent integral membrane proteins during membrane integration.

It is found in the cell inner membrane. Functionally, required for the insertion and/or proper folding and/or complex formation of integral membrane proteins into the membrane. Involved in integration of membrane proteins that insert both dependently and independently of the Sec translocase complex, as well as at least some lipoproteins. Aids folding of multispanning membrane proteins. The sequence is that of Membrane protein insertase YidC from Rickettsia bellii (strain OSU 85-389).